A 456-amino-acid chain; its full sequence is tRNA modification GTPase MnmE (456 aa).

R25, E82, and K121 together coordinate (6S)-5-formyl-5,6,7,8-tetrahydrofolate. The TrmE-type G domain occupies 217–379 (GIKVVIIGKP…LLDEIVKIAG (163 aa)). K(+) is bound at residue N227. GTP contacts are provided by residues 227-232 (NAGKSS), 246-252 (TDIAGTT), and 271-274 (DTAG). Mg(2+) is bound at residue S231. Residues T246, I248, and T251 each coordinate K(+). T252 contributes to the Mg(2+) binding site. Residue K456 coordinates (6S)-5-formyl-5,6,7,8-tetrahydrofolate.

Belongs to the TRAFAC class TrmE-Era-EngA-EngB-Septin-like GTPase superfamily. TrmE GTPase family. Homodimer. Heterotetramer of two MnmE and two MnmG subunits. K(+) serves as cofactor.

Its subcellular location is the cytoplasm. Functionally, exhibits a very high intrinsic GTPase hydrolysis rate. Involved in the addition of a carboxymethylaminomethyl (cmnm) group at the wobble position (U34) of certain tRNAs, forming tRNA-cmnm(5)s(2)U34. This is tRNA modification GTPase MnmE from Endomicrobium trichonymphae.